We begin with the raw amino-acid sequence, 127 residues long: Aspartate 1-decarboxylase (127 aa).

Catalysis depends on Ser25, which acts as the Schiff-base intermediate with substrate; via pyruvic acid. Position 25 is a pyruvic acid (Ser) (Ser25). Thr57 contributes to the substrate binding site. The active-site Proton donor is Tyr58. A substrate-binding site is contributed by Gly73–Ala75.

It belongs to the PanD family. Heterooctamer of four alpha and four beta subunits. Requires pyruvate as cofactor. Is synthesized initially as an inactive proenzyme, which is activated by self-cleavage at a specific serine bond to produce a beta-subunit with a hydroxyl group at its C-terminus and an alpha-subunit with a pyruvoyl group at its N-terminus.

It localises to the cytoplasm. It catalyses the reaction L-aspartate + H(+) = beta-alanine + CO2. It functions in the pathway cofactor biosynthesis; (R)-pantothenate biosynthesis; beta-alanine from L-aspartate: step 1/1. Catalyzes the pyruvoyl-dependent decarboxylation of aspartate to produce beta-alanine. This Neisseria meningitidis serogroup B (strain ATCC BAA-335 / MC58) protein is Aspartate 1-decarboxylase.